The sequence spans 702 residues: Sodium/hydrogen exchanger 6 (702 aa).

Helical transmembrane passes span 72–92 (SANL…IWLF), 104–124 (GLAM…IHVP), 177–197 (VTFD…FYAG), 212–232 (ILAY…SIMY), 253–273 (CLLF…AIFH), 279–299 (VELY…AIVL), 325–345 (IGIF…TGVV), 373–393 (TFLL…FCGI), 415–435 (FELL…LTLF), 437–457 (FQNH…IFLG), 480–500 (NFQH…ALAI), and 516–536 (LLIV…MLSC).

Belongs to the monovalent cation:proton antiporter 1 (CPA1) transporter (TC 2.A.36) family. In terms of assembly, homodimer. Interacts with RACK1; regulates the distribution of SLC9A6 between endosomes and the plasma membrane. Post-translationally, ubiquitinated (in vitro). In terms of processing, glycosylated.

The protein localises to the endosome membrane. It localises to the recycling endosome membrane. It is found in the early endosome membrane. The protein resides in the late endosome membrane. Its subcellular location is the cell membrane. It catalyses the reaction Na(+)(in) + H(+)(out) = Na(+)(out) + H(+)(in). The catalysed reaction is K(+)(in) + H(+)(out) = K(+)(out) + H(+)(in). Its function is as follows. Endosomal Na(+), K(+)/H(+) antiporter. Mediates the electroneutral exchange of endosomal luminal H(+) for a cytosolic Na(+) or K(+). By facilitating proton efflux, SLC9A6 counteracts the acidity generated by vacuolar (V)-ATPase, thereby limiting luminal acidification. Responsible for alkalizing and maintaining the endosomal pH, and consequently in, e.g., endosome maturation and trafficking of recycling endosomal cargo. Plays a critical role during neurodevelopment by regulating synaptic development and plasticity. Implicated in the maintenance of cell polarity in a manner that is dependent on its ability to modulate intravesicular pH. Regulates intracelular pH in some specialized cells, osteoclasts and stereocilia where this transporter localizes to the plasma membrane. The sequence is that of Sodium/hydrogen exchanger 6 (Slc9a6) from Mus musculus (Mouse).